Here is a 359-residue protein sequence, read N- to C-terminus: Endoglucanase (359 aa).

Positions 1-23 (MPLRALVAVIVTTAVMLVPRAWA) are cleaved as a signal peptide. Catalysis depends on Glu-53, which acts as the Proton donor. Residue Asp-110 is the Nucleophile of the active site.

It belongs to the glycosyl hydrolase 8 (cellulase D) family.

The enzyme catalyses Endohydrolysis of (1-&gt;4)-beta-D-glucosidic linkages in cellulose, lichenin and cereal beta-D-glucans.. The biological conversion of cellulose to glucose generally requires three types of hydrolytic enzymes: (1) Endoglucanases which cut internal beta-1,4-glucosidic bonds; (2) Exocellobiohydrolases that cut the disaccharide cellobiose from the non-reducing end of the cellulose polymer chain; (3) Beta-1,4-glucosidases which hydrolyze the cellobiose and other short cello-oligosaccharides to glucose. The polypeptide is Endoglucanase (Cellulomonas uda).